We begin with the raw amino-acid sequence, 203 residues long: NADH dehydrogenase [ubiquinone] 1 alpha subcomplex assembly factor 4 (203 aa).

This sequence belongs to the NDUFAF4 family. In terms of assembly, together with NdufAF3 associates with mitochondrial complex I assembly intermediates during its biogenesis.

Its function is as follows. Involved in the assembly of mitochondrial NADH:ubiquinone oxidoreductase complex (complex I). Together with NdufAF3, involved in biogenesis of complex 1 modules N, Q and P-peripheral, but not the P-distal module. Required for recruitment of the complex I assembly factor Timmdc1 to complex 1 assembly intermediates. This is NADH dehydrogenase [ubiquinone] 1 alpha subcomplex assembly factor 4 from Drosophila melanogaster (Fruit fly).